A 258-amino-acid polypeptide reads, in one-letter code: MAYVSMKQMLETGVHFGHQTRRWNPKMRPYIFGARNGIHIIDLQQTVKLFRIAHDKVVDIVAKGGKVLFIGTKRQAQEAVAAEAGRAGQFFVTNRWMGGTLTNFVTIQKSVDRLKKLESMFADGSINRYQKKEILLLERELAKLEETLGGIKNMDRLPQIAFIIDPHREDIAVKECRKLGIPIIAVTDTNCDPDVIDYIIPGNDDAIRAIKLFVAAFAEACMEGEAMGKDHKGETANAEEAMQKAAAVEAAAEAAPAQ.

Positions 234–258 (ETANAEEAMQKAAAVEAAAEAAPAQ) are disordered. Residues 236-258 (ANAEEAMQKAAAVEAAAEAAPAQ) show a composition bias toward low complexity.

It belongs to the universal ribosomal protein uS2 family.

In Desulfovibrio desulfuricans (strain ATCC 27774 / DSM 6949 / MB), this protein is Small ribosomal subunit protein uS2.